A 1733-amino-acid chain; its full sequence is Collagen alpha-1(XXIV) chain (1733 aa).

Residues 1-35 form the signal peptide; it reads MHLGAYRTRHGKVSPTTETKLFLRFIVLCVVWISV. The Laminin G-like domain occupies 102–229; sequence ISLRQPLTVL…TVCQLEIMPS (128 aa). A glycan (N-linked (GlcNAc...) asparagine) is linked at Asn157. The tract at residues 257-335 is disordered; sequence PHTAGMPTRH…SQEHQTPRAQ (79 aa). Residues 312-324 show a composition bias toward polar residues; sequence IPNNRSNGSATVH. N-linked (GlcNAc...) asparagine glycosylation is found at Asn366, Asn396, and Asn448. The tract at residues 505–1499 is disordered; that stretch reads YLRGPKGDPG…GPPGAPGPRR (995 aa). 15 Collagen-like domains span residues 506–561, 577–636, 679–738, 742–801, 802–861, 886–945, 946–1005, 1006–1065, 1072–1131, 1135–1189, 1191–1215, 1220–1279, 1316–1375, 1376–1435, and 1439–1498; these read LRGP…PGLS, GLVG…KGVR, GPAG…KGEQ, GEPG…PGQN, GPEG…KGEV, GSIG…KGQR, GPRG…SGDV, GPAG…PGPR, GEEG…PGQR, GKKG…GIPG, RGHQGQPGPSGLPGPKGEKGYPGED, GPPG…KGER, GVDG…KGEQ, GLPG…AGIV, and GPKG…PGPR. The segment covering 512–524 has biased composition (pro residues); that stretch reads DPGPPGPPGPMGI. 2 stretches are compositionally biased toward low complexity: residues 573–599 and 699–708; these read PGLLGLVGPPGLQGAKGLKGHPGLPGL and PGVTGSVGPA. The segment covering 776 to 789 has biased composition (pro residues); sequence DPGPQGPSGPPGPE. Residues 912-921 show a composition bias toward pro residues; the sequence is PGPPGAPGPM. Low complexity predominate over residues 923-944; the sequence is PLGLPGLVGARGAPGSPGPKGQ. Residues 1045–1054 are compositionally biased toward gly residues; it reads GAKGDGGPAG. Positions 1056-1074 are enriched in low complexity; that stretch reads AGATGEPGPRGEPGAPGEE. Positions 1084–1093 are enriched in gly residues; that stretch reads GAPGGSGLPG. A compositionally biased stretch (low complexity) spans 1175–1205; that stretch reads PLGLMGPEGEPGIPGYRGHQGQPGPSGLPGP. The span at 1237 to 1246 shows a compositional bias: basic and acidic residues; sequence TGEHGEEGYK. The segment covering 1323–1339 has biased composition (low complexity); it reads YPGKPGLPGKQGLLGVP. The span at 1352-1361 shows a compositional bias: gly residues; it reads GPQGGKGASG. Low complexity-rich tracts occupy residues 1371–1386 and 1434–1444; these read PKGEQGLPGQPGVPGQ and IVGIVGPKGPI. Over residues 1485-1495 the composition is skewed to pro residues; the sequence is QPGPPGPPGAP. Positions 1534–1733 constitute a Fibrillar collagen NC1 domain; the sequence is SDIFKTLTYL…YIESNSVCFL (200 aa).

The protein belongs to the fibrillar collagen family. As to expression, expressed in skeleton. Found at ossification centers of the craniofacial, axial and appendicular skeleton. Also expressed in retina and to a lower extent in cornea, skin and tendon.

The protein localises to the secreted. Its subcellular location is the extracellular space. It localises to the extracellular matrix. Functionally, involved in osteoblast differentiation. This is Collagen alpha-1(XXIV) chain (Col24a1) from Mus musculus (Mouse).